Reading from the N-terminus, the 200-residue chain is MQKFIIHKGIACPLEYANIDTDQIIPKQFLLAVSKQGFGKHLFHDLRYVDDKESVLNMDFNLNKKEYQNSSILVSFENFGSGSSREHAPWALVDYGIRAIIAPSFADIFKNNALGNGLLTIELTKDEVLEIVDELKKSQDKNIEISLLEKRVFFKDKIFSFDLDDFHRICLLEGLDNIALTLKHEAQIKAYEKNSKSFLV.

The protein belongs to the LeuD family. LeuD type 1 subfamily. In terms of assembly, heterodimer of LeuC and LeuD.

The enzyme catalyses (2R,3S)-3-isopropylmalate = (2S)-2-isopropylmalate. It participates in amino-acid biosynthesis; L-leucine biosynthesis; L-leucine from 3-methyl-2-oxobutanoate: step 2/4. Catalyzes the isomerization between 2-isopropylmalate and 3-isopropylmalate, via the formation of 2-isopropylmaleate. In Campylobacter jejuni subsp. doylei (strain ATCC BAA-1458 / RM4099 / 269.97), this protein is 3-isopropylmalate dehydratase small subunit.